The sequence spans 346 residues: UDP-3-O-acylglucosamine N-acyltransferase (346 aa).

Residue His-253 is the Proton acceptor of the active site.

This sequence belongs to the transferase hexapeptide repeat family. LpxD subfamily. In terms of assembly, homotrimer.

The enzyme catalyses a UDP-3-O-[(3R)-3-hydroxyacyl]-alpha-D-glucosamine + a (3R)-hydroxyacyl-[ACP] = a UDP-2-N,3-O-bis[(3R)-3-hydroxyacyl]-alpha-D-glucosamine + holo-[ACP] + H(+). It participates in bacterial outer membrane biogenesis; LPS lipid A biosynthesis. Catalyzes the N-acylation of UDP-3-O-acylglucosamine using 3-hydroxyacyl-ACP as the acyl donor. Is involved in the biosynthesis of lipid A, a phosphorylated glycolipid that anchors the lipopolysaccharide to the outer membrane of the cell. The protein is UDP-3-O-acylglucosamine N-acyltransferase of Rickettsia typhi (strain ATCC VR-144 / Wilmington).